Consider the following 372-residue polypeptide: Carbamoyl phosphate synthase small chain (372 aa).

The CPSase stretch occupies residues Met1–Asn182. Residues Ser53, Gly234, and Gly236 each contribute to the L-glutamine site. In terms of domain architecture, Glutamine amidotransferase type-1 spans Thr186–Ala372. Residue Cys262 is the Nucleophile of the active site. L-glutamine-binding residues include Leu263, Gln266, Asn304, Gly306, and Tyr307. Residues His347 and Glu349 contribute to the active site.

It belongs to the CarA family. Composed of two chains; the small (or glutamine) chain promotes the hydrolysis of glutamine to ammonia, which is used by the large (or ammonia) chain to synthesize carbamoyl phosphate. Tetramer of heterodimers (alpha,beta)4.

The catalysed reaction is hydrogencarbonate + L-glutamine + 2 ATP + H2O = carbamoyl phosphate + L-glutamate + 2 ADP + phosphate + 2 H(+). The enzyme catalyses L-glutamine + H2O = L-glutamate + NH4(+). The protein operates within amino-acid biosynthesis; L-arginine biosynthesis; carbamoyl phosphate from bicarbonate: step 1/1. Its pathway is pyrimidine metabolism; UMP biosynthesis via de novo pathway; (S)-dihydroorotate from bicarbonate: step 1/3. In terms of biological role, small subunit of the glutamine-dependent carbamoyl phosphate synthetase (CPSase). CPSase catalyzes the formation of carbamoyl phosphate from the ammonia moiety of glutamine, carbonate, and phosphate donated by ATP, constituting the first step of 2 biosynthetic pathways, one leading to arginine and/or urea and the other to pyrimidine nucleotides. The small subunit (glutamine amidotransferase) binds and cleaves glutamine to supply the large subunit with the substrate ammonia. The sequence is that of Carbamoyl phosphate synthase small chain from Sulfurisphaera tokodaii (strain DSM 16993 / JCM 10545 / NBRC 100140 / 7) (Sulfolobus tokodaii).